A 326-amino-acid polypeptide reads, in one-letter code: Probable cell division protein WhiA (326 aa).

Residues 275–308 (SLEELGQLADPPLTKDAIAGRIRRLLAMADKRAA) constitute a DNA-binding region (H-T-H motif).

Belongs to the WhiA family.

In terms of biological role, involved in cell division and chromosome segregation. The protein is Probable cell division protein WhiA of Thermobifida fusca (strain YX).